The chain runs to 530 residues: Hyccin 2 (530 aa).

A phosphothreonine mark is found at Thr30 and Thr306. Phosphoserine is present on residues Ser321 and Ser341. Residues Arg328–Gln410 form a disordered region. Polar residues predominate over residues Ser353–Gly373. A phosphoserine mark is found at Ser430, Ser442, Ser444, and Ser491. Residues Gly498–Val530 form a disordered region. Residues Thr514–Val530 are compositionally biased toward polar residues.

It belongs to the Hyccin family. Component of a phosphatidylinositol 4-kinase (PI4K) complex, composed of PI4KA, EFR3 (EFR3A or EFR3B), TTC7 (TTC7A or TTC7B) and HYCC (HYCC1 or HYCC2).

The protein resides in the cytoplasm. Its subcellular location is the cytosol. The protein localises to the cell membrane. Functionally, component of a complex required to localize phosphatidylinositol 4-kinase (PI4K) to the plasma membrane. This Pongo abelii (Sumatran orangutan) protein is Hyccin 2 (HYCC2).